The primary structure comprises 240 residues: Pyridoxine 5'-phosphate synthase (240 aa).

A 3-amino-2-oxopropyl phosphate-binding site is contributed by Asn-6. 8 to 9 (DH) provides a ligand contact to 1-deoxy-D-xylulose 5-phosphate. Position 17 (Arg-17) interacts with 3-amino-2-oxopropyl phosphate. Catalysis depends on His-42, which acts as the Proton acceptor. 1-deoxy-D-xylulose 5-phosphate contacts are provided by Arg-44 and His-49. Residue Glu-69 is the Proton acceptor of the active site. Thr-99 is a 1-deoxy-D-xylulose 5-phosphate binding site. His-190 serves as the catalytic Proton donor. 3-amino-2-oxopropyl phosphate is bound by residues Gly-191 and 212–213 (GH).

Belongs to the PNP synthase family. In terms of assembly, homooctamer; tetramer of dimers.

Its subcellular location is the cytoplasm. It carries out the reaction 3-amino-2-oxopropyl phosphate + 1-deoxy-D-xylulose 5-phosphate = pyridoxine 5'-phosphate + phosphate + 2 H2O + H(+). It functions in the pathway cofactor biosynthesis; pyridoxine 5'-phosphate biosynthesis; pyridoxine 5'-phosphate from D-erythrose 4-phosphate: step 5/5. Its function is as follows. Catalyzes the complicated ring closure reaction between the two acyclic compounds 1-deoxy-D-xylulose-5-phosphate (DXP) and 3-amino-2-oxopropyl phosphate (1-amino-acetone-3-phosphate or AAP) to form pyridoxine 5'-phosphate (PNP) and inorganic phosphate. The protein is Pyridoxine 5'-phosphate synthase of Pseudomonas entomophila (strain L48).